A 477-amino-acid chain; its full sequence is MTEKFLFLYLSLLPMPLLSQAQWNENSLVSFSKIIASGNHLSNCWICHNFITRSSSYQYILVRNFSLNLTFGSGIPEGQHKSVPLQVSLANSAHQVPCLDLTPPFNQSSKTSFYFYNCSSLNQTCCPCPEGHCDRKNTSEEGFPSPTIHPMSFSPAGCHPNLTHWCPAKQMNDYRDKSPQNRCAAWEGKELITWRVLYLLPKAHTVPTWPKSTVPLGGPLSPACNQTIPAGWKSQLHKWFDSHIPRWACTPPGYVFLCGPQKNKLPFDGSPKITYSTPPVANLYTCINNIQHTGECAVGLLGPRGIGVTIYNTTQPRQKRALGLILAGMGAAIGMIAPWGGFTYHDVTLRNLSRQIDNIAKSTRDSISKLKASIDSLANVVMNNRLALDYLLAEQGGVCAVISKSCCIYVNNSGAIEEDIKKIYDEVTWLHNFGKGDSAGSIWEAVKSALPSLTWFVPLLGPAALNSLLSPLWPLSL.

The N-terminal stretch at 1–21 (MTEKFLFLYLSLLPMPLLSQA) is a signal peptide. Over 22–321 (QWNENSLVSF…NTTQPRQKRA (300 aa)) the chain is Extracellular. N-linked (GlcNAc...) asparagine glycosylation occurs at Asn-68. A helical transmembrane segment spans residues 322-342 (LGLILAGMGAAIGMIAPWGGF). Topologically, residues 343-477 (TYHDVTLRNL…LLSPLWPLSL (135 aa)) are cytoplasmic.

It belongs to the gamma type-C retroviral envelope protein family. In terms of tissue distribution, expressed in placenta.

The protein localises to the membrane. The protein is Endogenous retrovirus group V member 1 Env polyprotein (ERVV-1) of Homo sapiens (Human).